We begin with the raw amino-acid sequence, 347 residues long: NADH-ubiquinone oxidoreductase chain 2 (347 aa).

Helical transmembrane passes span 3 to 23 (PPIL…VLTS), 25 to 45 (HWLL…PILM), 59 to 79 (YFLT…INLL), 93 to 115 (MAST…HFWV), 149 to 169 (INTN…GWGG), 178 to 198 (ILAY…TYNP), 200 to 220 (VMIL…MLFI), 242 to 262 (SFIL…GFIP), 274 to 294 (EMII…YFYM), and 323 to 343 (MALL…TPMM).

Belongs to the complex I subunit 2 family. Core subunit of respiratory chain NADH dehydrogenase (Complex I) which is composed of 45 different subunits. Interacts with TMEM242.

The protein localises to the mitochondrion inner membrane. The catalysed reaction is a ubiquinone + NADH + 5 H(+)(in) = a ubiquinol + NAD(+) + 4 H(+)(out). Functionally, core subunit of the mitochondrial membrane respiratory chain NADH dehydrogenase (Complex I) which catalyzes electron transfer from NADH through the respiratory chain, using ubiquinone as an electron acceptor. Essential for the catalytic activity and assembly of complex I. The protein is NADH-ubiquinone oxidoreductase chain 2 of Nandinia binotata (African palm civet).